The chain runs to 411 residues: MDAALLLSLLEANCSLALAEELLLDGWGVPPDPEGPYTYCNTTLDQIGTCWPQSAPGALVERPCPEYFNGIKYNTTRNAYRECLENGTWASRVNYSHCEPILDDKQRKYDLHYRIALIVNYLGHCVSVVALVAAFLLFLVLRSIRCLRNVIHWNLITTFILRNIAWFLLQLIDHEVHEGNEVWCRCITTIFNYFVVTNFFWMFVEGCYLHTAIVMTYSTEHLRKWLFLFIGWCIPCPIIIAWAVGKLYYENEQCWFGKEAGDLVDYIYQGPVMLVLLINFVFLFNIVRILMTKLRASTTSETIQYRKAVKATLVLLPLLGITYMLFFVNPGEDDLSQIVFIYFNSFLQSFQGFFVSVFYCFFNGEVRAALRKRWHRWQDHHALRVPVARAMSIPTSPTRISFHSIKQTAAV.

The segment at residues 1–19 (MDAALLLSLLEANCSLALA) is a signal peptide (not cleaved). Residues 1–108 (MDAALLLSLL…EPILDDKQRK (108 aa)) are Extracellular-facing. N-linked (GlcNAc...) asparagine glycans are attached at residues Asn13, Asn41, Asn74, Asn86, and Asn94. 3 cysteine pairs are disulfide-bonded: Cys14-Cys50, Cys40-Cys83, and Cys64-Cys98. A helical membrane pass occupies residues 109-139 (YDLHYRIALIVNYLGHCVSVVALVAAFLLFL). Residues 140–146 (VLRSIRC) are Cytoplasmic-facing. Residues 147-171 (LRNVIHWNLITTFILRNIAWFLLQL) form a helical membrane-spanning segment. The Extracellular segment spans residues 172 to 185 (IDHEVHEGNEVWCR). A disulfide bond links Cys184 and Cys254. A helical transmembrane segment spans residues 186–214 (CITTIFNYFVVTNFFWMFVEGCYLHTAIV). The Cytoplasmic portion of the chain corresponds to 215–221 (MTYSTEH). The chain crosses the membrane as a helical span at residues 222 to 249 (LRKWLFLFIGWCIPCPIIIAWAVGKLYY). The Extracellular segment spans residues 250–265 (ENEQCWFGKEAGDLVD). The helical transmembrane segment at 266 to 291 (YIYQGPVMLVLLINFVFLFNIVRILM) threads the bilayer. Residues 292-302 (TKLRASTTSET) lie on the Cytoplasmic side of the membrane. The helical transmembrane segment at 303 to 327 (IQYRKAVKATLVLLPLLGITYMLFF) threads the bilayer. Residues 328 to 334 (VNPGEDD) lie on the Extracellular side of the membrane. The helical transmembrane segment at 335-364 (LSQIVFIYFNSFLQSFQGFFVSVFYCFFNG) threads the bilayer. Over 365–411 (EVRAALRKRWHRWQDHHALRVPVARAMSIPTSPTRISFHSIKQTAAV) the chain is Cytoplasmic.

The protein belongs to the G-protein coupled receptor 2 family. As to quaternary structure, monomer. Interacts with CRF, UCN, UCN2 and UCN3. Post-translationally, a N-glycosylation site within the signal peptide impedes its proper cleavage and function. In terms of tissue distribution, highly expressed in the heart. Also expressed in lungs, skeletal muscle, gastrointestinal tract, epididymis, and brain.

Its subcellular location is the cell membrane. G-protein coupled receptor for CRH (corticotropin-releasing factor), UCN (urocortin), UCN2 and UCN3. Has high affinity for UCN. Ligand binding causes a conformation change that triggers signaling via guanine nucleotide-binding proteins (G proteins) and down-stream effectors, such as adenylate cyclase. Promotes the activation of adenylate cyclase, leading to increased intracellular cAMP levels. The chain is Corticotropin-releasing factor receptor 2 (Crhr2) from Mus musculus (Mouse).